Reading from the N-terminus, the 154-residue chain is Endoribonuclease YbeY (154 aa).

Residues His-117, His-121, and His-127 each contribute to the Zn(2+) site.

This sequence belongs to the endoribonuclease YbeY family. It depends on Zn(2+) as a cofactor.

It localises to the cytoplasm. In terms of biological role, single strand-specific metallo-endoribonuclease involved in late-stage 70S ribosome quality control and in maturation of the 3' terminus of the 16S rRNA. This Aromatoleum aromaticum (strain DSM 19018 / LMG 30748 / EbN1) (Azoarcus sp. (strain EbN1)) protein is Endoribonuclease YbeY.